The sequence spans 160 residues: FMRFamide-like neuropeptides 13 (160 aa).

An N-terminal signal peptide occupies residues 1-17 (MMTSLLTISMFVVAIQA). Positions 18 to 43 (FDSSEIRMLDEQYDTKNPFFQFLENS) are excised as a propeptide. Phenylalanine amide occurs at positions 60, 73, 85, 98, 110, 123, 135, 146, and 157.

Belongs to the FARP (FMRFamide related peptide) family. Expressed in the ASE sensory neurons, the DD motor neurons, the 15, M3 and M5 cholinergic pharyngeal motoneurons, and the ASG, ASK and BAG neurons.

It is found in the secreted. Its function is as follows. Probable FMRFamide-like neuropeptides. Binds to neuronal receptors such as dmsr-1 to promote sleep in response to cellular stress also known as stress-induced sleep (SIS). Plays a role in behaviors associated with SIS, acting in concert with the FMRFamide related peptide, flp-24 and neuropeptide-like protein nlp-8. AADGAPLIRF-amide: Inhibits muscle tension in somatic muscle. Acts as a ligand for the npr-22 receptor in vitro. Acts as a ligand for isoform a of the dmsr-1 G-protein coupled receptor in vitro. In terms of biological role, APEASPFIRF-amide: Inhibits muscle tension in somatic muscle. Potent inhibitor of the activity of the dissected pharyngeal myogenic muscle system. Acts as a ligand for isoform a of the dmsr-1 G-protein coupled receptor in vitro. Functionally, acts as a ligand for the npr-22 receptor in vitro. Acts as a ligand for isoform a of the dmsr-1 G-protein coupled receptor in vitro. Its function is as follows. Acts as a ligand for isoform a of the dmsr-1 G-protein coupled receptor in vitro. This is FMRFamide-like neuropeptides 13 from Caenorhabditis elegans.